We begin with the raw amino-acid sequence, 66 residues long: Large ribosomal subunit protein bL31 (66 aa).

The Zn(2+) site is built by Cys16, Cys18, Cys36, and Cys39.

The protein belongs to the bacterial ribosomal protein bL31 family. Type A subfamily. In terms of assembly, part of the 50S ribosomal subunit. The cofactor is Zn(2+).

Functionally, binds the 23S rRNA. This chain is Large ribosomal subunit protein bL31, found in Campylobacter fetus subsp. fetus (strain 82-40).